The primary structure comprises 78 residues: UPF0335 protein RBE_1185 (78 aa).

It belongs to the UPF0335 family.

The polypeptide is UPF0335 protein RBE_1185 (Rickettsia bellii (strain RML369-C)).